We begin with the raw amino-acid sequence, 342 residues long: S-adenosylmethionine:tRNA ribosyltransferase-isomerase (342 aa).

Belongs to the QueA family. Monomer.

It is found in the cytoplasm. The catalysed reaction is 7-aminomethyl-7-carbaguanosine(34) in tRNA + S-adenosyl-L-methionine = epoxyqueuosine(34) in tRNA + adenine + L-methionine + 2 H(+). The protein operates within tRNA modification; tRNA-queuosine biosynthesis. Its function is as follows. Transfers and isomerizes the ribose moiety from AdoMet to the 7-aminomethyl group of 7-deazaguanine (preQ1-tRNA) to give epoxyqueuosine (oQ-tRNA). The sequence is that of S-adenosylmethionine:tRNA ribosyltransferase-isomerase from Brevibacillus brevis (strain 47 / JCM 6285 / NBRC 100599).